The primary structure comprises 364 residues: Sorbitol dehydrogenase (364 aa).

Residue cysteine 54 participates in Zn(2+) binding. Tyrosine 60 is a substrate binding site. Zn(2+)-binding residues include histidine 79 and glutamate 80. A substrate-binding site is contributed by glutamate 165. NAD(+) contacts are provided by residues isoleucine 193, aspartate 213, arginine 218, 284–286 (VGM), and 308–310 (VFR). Residues arginine 310 and tyrosine 311 each coordinate substrate.

This sequence belongs to the zinc-containing alcohol dehydrogenase family. Homotetramer. Requires Zn(2+) as cofactor. As to expression, mostly expressed in dry seeds and leaves, and, to a lower extent, in roots, stems, flowers and siliques (at protein level).

It is found in the mitochondrion membrane. It localises to the cell membrane. The protein resides in the cytoplasm. The protein localises to the cytosol. It carries out the reaction keto-D-fructose + NADH + H(+) = D-sorbitol + NAD(+). The catalysed reaction is ribitol + NAD(+) = D-ribulose + NADH + H(+). It catalyses the reaction xylitol + NAD(+) = D-xylulose + NADH + H(+). Functionally, polyol dehydrogenase that catalyzes the NAD(+)-dependent oxidation of various sugar alcohols. Is mostly active with D-sorbitol (D-glucitol), ribitol and xylitol as substrates, leading to the C2-oxidized products D-fructose, D-ribulose and D-xylulose, respectively. To a lesser extent, can also oxidize arabitol, mannitol, lactitol and maltitol in vitro. Is required for sorbitol metabolism. Cannot use NADP(+) as the electron acceptor. This is Sorbitol dehydrogenase (SDH) from Arabidopsis thaliana (Mouse-ear cress).